Consider the following 130-residue polypeptide: Small ribosomal subunit protein uS8 (130 aa).

It belongs to the universal ribosomal protein uS8 family. As to quaternary structure, part of the 30S ribosomal subunit. Contacts proteins S5 and S12.

One of the primary rRNA binding proteins, it binds directly to 16S rRNA central domain where it helps coordinate assembly of the platform of the 30S subunit. This chain is Small ribosomal subunit protein uS8, found in Phytoplasma mali (strain AT).